A 487-amino-acid chain; its full sequence is Beta-barrel assembly-enhancing protease (487 aa).

The first 27 residues, 1 to 27 (MFRQLKKNLVATLIAAMTIGQVAPAFA), serve as a signal peptide directing secretion. Zn(2+) is bound at residue His-136. The active site involves Glu-137. 2 residues coordinate Zn(2+): His-140 and Glu-201. Residue Asp-205 is the Proton donor of the active site. TPR repeat units follow at residues 309-342 (RAAQ…EPGN), 344-376 (WYLD…RTNP), 377-409 (VLQL…NKDD), and 427-460 (DQEL…VKLG).

This sequence belongs to the peptidase M48 family. BepA subfamily. The cofactor is Zn(2+).

Its subcellular location is the periplasm. In terms of biological role, functions both as a chaperone and a metalloprotease. Maintains the integrity of the outer membrane by promoting either the assembly or the elimination of outer membrane proteins, depending on their folding state. The polypeptide is Beta-barrel assembly-enhancing protease (Escherichia coli O157:H7).